Reading from the N-terminus, the 419-residue chain is Ribosome biogenesis protein WDR12 homolog (419 aa).

Residues 10–91 (VQVHLKTKQE…EDAIEIEYVE (82 aa)) are ubiquitin-like (UBL) domain. 7 WD repeats span residues 103–141 (LHDDWVSAVKASGKWILTGCYDNTLNIWTNKGKHILTIP), 142–184 (GHTA…NTVE), 191–230 (GHERGVDSVSVSPDGQRFATGSWDTMLKVWSAELEDAGEG), 249–287 (GHRESISAVQWMDASTLLTGSWDHTLKVWDLSLEGIKAE), 289–328 (STNKSIFDASYSKLNHLILTASADKNLRLYDSRTNQGSVV), 334–374 (GHNA…APLY), and 378–416 (GHGEKVLDIDWSNPKYIVSGGSDNTVRVFKSRKALVENM).

Belongs to the WD repeat WDR12/YTM1 family.

The protein resides in the nucleus. The protein localises to the nucleolus. It is found in the nucleoplasm. Its function is as follows. Required for maturation of ribosomal RNAs and formation of the large ribosomal subunit. The protein is Ribosome biogenesis protein WDR12 homolog of Drosophila pseudoobscura pseudoobscura (Fruit fly).